The primary structure comprises 606 residues: Glucose methanol choline oxidoreductase atC (606 aa).

Residues 1-19 (MRVFPTYIAVSGLFGGAFA) form the signal peptide. Asn-43, Asn-69, Asn-87, Asn-290, Asn-368, Asn-418, Asn-421, and Asn-552 each carry an N-linked (GlcNAc...) asparagine glycan.

The protein belongs to the GMC oxidoreductase family.

It carries out the reaction terremutin + A = terreate + AH2. Its pathway is secondary metabolite biosynthesis. Its function is as follows. Glucose methanol choline oxidoreductase; part of the gene cluster that mediates the biosynthesis of terreic acid, a quinone epoxide inhibitor of Bruton's tyrosine kinase. The first step of the pathway is the synthesis of 6-methylsalicylic acid (6-MSA) by the 6-methylsalicylic acid synthase atX. In the biosynthesis of 6-MSA, atX utilizes one acetyl-CoA and three malonyl-CoAs as its substrates and catalyzes a series of programmed reactions including Claisen condensation, reduction, aldol cyclization, and the hydrolytic cleavage that yields 6-MSA. The 6-methylsalicylate 1-monooxygenase atA then catalyzes the decarboxylative hydroxylation of 6-MSA to 3-methylcatechol. The next step is the conversion of 3-methylcatechol to 3-methyl-1,2,4-benzenetriol by cytochrome P450 monooxygenase atE, which is enhanced by cytochrome P450 monooxygenase atG. Then, the epoxidase atD catalyzes the epoxidation and hydroxyl oxidation of 3-methyl-1,2,4-benzenetriol to terremutin. Lastly, GMC oxidoreductase atC oxidizes terremutin to terreic acid. This is Glucose methanol choline oxidoreductase atC from Aspergillus terreus (strain NIH 2624 / FGSC A1156).